Consider the following 688-residue polypeptide: Hid-1 family protein P19A11.07c (688 aa).

This sequence belongs to the hid-1 family.

It is found in the cytoplasm. Its subcellular location is the nucleus. This chain is Hid-1 family protein P19A11.07c, found in Schizosaccharomyces pombe (strain 972 / ATCC 24843) (Fission yeast).